Here is a 506-residue protein sequence, read N- to C-terminus: Phenylacetaldehyde synthase (506 aa).

3 residues coordinate L-phenylalanine: Pro-101, His-202, and His-317. An N6-(pyridoxal phosphate)lysine modification is found at Lys-318.

Belongs to the group II decarboxylase family. As to quaternary structure, homotetramer. Requires pyridoxal 5'-phosphate as cofactor. As to expression, highly expressed in corolla limbs and at lower levels in corolla tubes and ovaries.

It carries out the reaction L-phenylalanine + O2 + H2O + H(+) = 2-phenylacetaldehyde + H2O2 + NH4(+) + CO2. Bifunctional enzyme that catalyzes the decarboxylation of L-phenylalanine to 2-phenylethylamine, which is then oxidized to form 2-phenylacetaldehyde, a constituent of floral scent. 2-phenylacetaldehyde is a precursor of 2-phenylethanol, another constituent of floral scent. This is Phenylacetaldehyde synthase from Petunia hybrida (Petunia).